The chain runs to 446 residues: Glutamine synthetase (446 aa).

The 94-residue stretch at 14 to 107 (NNVKFLRFQF…IICDVYRKNG (94 aa)) folds into the GS beta-grasp domain. The GS catalytic domain occupies 114 to 446 (PRGCLKRVLA…DWEFNKYVRI (333 aa)). The Mg(2+) site is built by glutamate 138 and glutamate 140. Position 187 (glutamate 187) interacts with ATP. Mg(2+) contacts are provided by glutamate 192 and glutamate 199. L-glutamate contacts are provided by residues 243-244 (NG) and glycine 244. Histidine 248 contributes to the Mg(2+) binding site. ATP is bound at residue serine 252. The L-glutamate site is built by arginine 301, glutamate 307, and arginine 319. Residues arginine 319, arginine 324, and lysine 331 each coordinate ATP. Residue glutamate 336 participates in Mg(2+) binding. Arginine 338 lines the L-glutamate pocket.

This sequence belongs to the glutamine synthetase family. Oligomer of 12 subunits arranged in the form of two hexagons. Requires Mg(2+) as cofactor.

The protein localises to the cytoplasm. The catalysed reaction is L-glutamate + NH4(+) + ATP = L-glutamine + ADP + phosphate + H(+). Probably involved in nitrogen metabolism via ammonium assimilation. Catalyzes the ATP-dependent biosynthesis of glutamine from glutamate and ammonia. The chain is Glutamine synthetase from Methanococcus voltae.